The sequence spans 165 residues: UPF0262 protein Sala_0765 (165 aa).

This sequence belongs to the UPF0262 family.

The polypeptide is UPF0262 protein Sala_0765 (Sphingopyxis alaskensis (strain DSM 13593 / LMG 18877 / RB2256) (Sphingomonas alaskensis)).